Reading from the N-terminus, the 501-residue chain is Acyl-CoA-binding domain-containing protein 5A (501 aa).

The region spanning 9-98 is the ACB domain; sequence YEQRFNAAVK…LKLILESMPV (90 aa). An acyl-CoA is bound by residues 20 to 29, 40 to 44, K66, and Y85; these read IQNLPPNGSF and YSYYK. The interval 173–405 is disordered; it reads IDLEDREDDD…GERWGADGPM (233 aa). Residues 176–195 show a composition bias toward acidic residues; it reads EDREDDDDEDEEGERDEVEE. A compositionally biased stretch (polar residues) spans 219–235; the sequence is SNGSISQHKGLSNGTHG. Basic and acidic residues-rich tracts occupy residues 236-254, 266-283, and 328-366; these read SKSD…HMNH, NSEK…HVAS, and RSQD…KRSD. The span at 376–389 shows a compositional bias: low complexity; the sequence is SRSPASGSGSAGPQ. Positions 406–437 form a coiled coil; sequence TENLNEQIICALARLQDDMQSVLQRLHTLEAL. Residues 465-485 form a helical membrane-spanning segment; that stretch reads WWPFDVSLGTVAFAVVWPFVV.

The protein belongs to the ATG37 family.

Its subcellular location is the membrane. In terms of biological role, acyl-CoA binding protein which acts as the peroxisome receptor for pexophagy but is dispensable for aggrephagy and nonselective autophagy. Binds medium- and long-chain acyl-CoA esters. This chain is Acyl-CoA-binding domain-containing protein 5A (acbd5a), found in Danio rerio (Zebrafish).